The following is a 292-amino-acid chain: ATP phosphoribosyltransferase (292 aa).

It belongs to the ATP phosphoribosyltransferase family. Long subfamily. The cofactor is Mg(2+).

It localises to the cytoplasm. It catalyses the reaction 1-(5-phospho-beta-D-ribosyl)-ATP + diphosphate = 5-phospho-alpha-D-ribose 1-diphosphate + ATP. The protein operates within amino-acid biosynthesis; L-histidine biosynthesis; L-histidine from 5-phospho-alpha-D-ribose 1-diphosphate: step 1/9. Its activity is regulated as follows. Feedback inhibited by histidine. Catalyzes the condensation of ATP and 5-phosphoribose 1-diphosphate to form N'-(5'-phosphoribosyl)-ATP (PR-ATP). Has a crucial role in the pathway because the rate of histidine biosynthesis seems to be controlled primarily by regulation of HisG enzymatic activity. In Desulfatibacillum aliphaticivorans, this protein is ATP phosphoribosyltransferase.